The following is a 208-amino-acid chain: Uracil phosphoribosyltransferase (208 aa).

Residues Arg-78, Arg-103, and 130-138 (DPMLATGGT) each bind 5-phospho-alpha-D-ribose 1-diphosphate. Uracil contacts are provided by residues Ile-193 and 198–200 (GDA). Residue Asp-199 coordinates 5-phospho-alpha-D-ribose 1-diphosphate.

This sequence belongs to the UPRTase family. Mg(2+) serves as cofactor.

It catalyses the reaction UMP + diphosphate = 5-phospho-alpha-D-ribose 1-diphosphate + uracil. It participates in pyrimidine metabolism; UMP biosynthesis via salvage pathway; UMP from uracil: step 1/1. Its activity is regulated as follows. Allosterically activated by GTP. Catalyzes the conversion of uracil and 5-phospho-alpha-D-ribose 1-diphosphate (PRPP) to UMP and diphosphate. The sequence is that of Uracil phosphoribosyltransferase from Oleidesulfovibrio alaskensis (strain ATCC BAA-1058 / DSM 17464 / G20) (Desulfovibrio alaskensis).